The sequence spans 1489 residues: DEAD-box ATP-dependent DNA helicase Fancm (1489 aa).

Residues 65-237 enclose the Helicase ATP-binding domain; the sequence is IVQSALFKNT…AVCRNLYISN (173 aa). ATP is bound at residue 78 to 85; that stretch reads LPTGLGKT. The short motif at 185–188 is the DEAH box element; that stretch reads DEAH. The Helicase C-terminal domain maps to 418-584; that stretch reads KLRQVLVQHF…VVKLSLYEQN (167 aa). Disordered stretches follow at residues 591–647, 980–1000, 1145–1182, 1196–1222, 1255–1293, and 1452–1489; these read KFQP…ESQQ, VEESQRSTPISIADSSGESNH, TETIKNSENKNSHEDGSRTVSPDIFGSDSMSPLKPQGK, VLPCPPPNSVGLNSPENRKRTNPSIQE, NPTISVPKDEEDSPIARRPSKRKIVISSDEEEEQKPQIA, and ERRKQRRLGKVPSAPVNKRRRLQTISTSSDEDDVVLID. Basic and acidic residues predominate over residues 594–610; that stretch reads PKCEEKHMEPVAEEKPK. The segment covering 611–625 has biased composition (basic residues); the sequence is PKSAAKTKESRKRKQ. Over residues 985–998 the composition is skewed to polar residues; the sequence is RSTPISIADSSGES. Residues 1149–1161 show a composition bias toward basic and acidic residues; the sequence is KNSENKNSHEDGS. Acidic residues predominate over residues 1480–1489; it reads SDEDDVVLID.

The protein belongs to the DEAD box helicase family. DEAH subfamily. FANCM sub-subfamily.

The protein resides in the nucleus. It catalyses the reaction ATP + H2O = ADP + phosphate + H(+). It carries out the reaction Couples ATP hydrolysis with the unwinding of duplex DNA by translocating in the 3'-5' direction.. Functionally, a ssDNA-dependent ATPase with 3' to 5' helicase activity. Involved in multiple DNA-damage responses, some that require ATPase and helicase activity and some that are independent of these. Involved in DNA interstrand cross-link repair, probably together with Fancl and other Fanconi anemia pathway homologs. Independent of Fancl involved in DNA double strand break repair, including contributing to the synthesis-dependent strand annealing (SDSA) pathway. Probably contributes to SDSA by unwinding short duplex regions in complex D-loop-like DNA structures. The chain is DEAD-box ATP-dependent DNA helicase Fancm from Drosophila melanogaster (Fruit fly).